We begin with the raw amino-acid sequence, 417 residues long: Lysosome-associated membrane glycoprotein 1 (417 aa).

The first 28 residues, 1-28, serve as a signal peptide directing secretion; the sequence is MAAPGSARRPLLLLLLLLLLGLMHCASA. Positions 29–194 are first lumenal domain; that stretch reads AMFMVKNGNG…SRGETRCEQD (166 aa). The Lumenal segment spans residues 29 to 382; that stretch reads AMFMVKNGNG…EECLLDENSM (354 aa). N37 and N45 each carry an N-linked (GlcNAc...) asparagine glycan. The cysteines at positions 41 and 80 are disulfide-linked. N62 is a glycosylation site (N-linked (GlcNAc...) (polylactosaminoglycan) asparagine). N76, N84, N103, and N107 each carry an N-linked (GlcNAc...) asparagine glycan. 2 N-linked (GlcNAc...) (polylactosaminoglycan) asparagine glycosylation sites follow: N121 and N130. A disulfide bridge links C155 with C191. Residues N165 and N181 are each glycosylated (N-linked (GlcNAc...) asparagine). The tract at residues 184–221 is disordered; it reads FSRGETRCEQDRPSPTTAPPAPPSPSPSPVPKSPSVDK. The hinge stretch occupies residues 195-227; sequence RPSPTTAPPAPPSPSPSPVPKSPSVDKYNVSGT. The O-linked (GalNAc...) serine; partial glycan is linked to S197. O-linked (GalNAc...) threonine glycans are attached at residues T199 and T200. A compositionally biased stretch (pro residues) spans 199-215; that stretch reads TTAPPAPPSPSPSPVPK. 3 O-linked (GalNAc...) serine glycosylation sites follow: S207, S209, and S211. N223 and N228 each carry an N-linked (GlcNAc...) (polylactosaminoglycan) asparagine glycan. Residues 228 to 382 are second lumenal domain; sequence NGTCLLASMG…EECLLDENSM (155 aa). An intrachain disulfide couples C231 to C269. N241, N249, N261, N293, and N322 each carry an N-linked (GlcNAc...) asparagine glycan. A disulfide bridge links C338 with C375. The helical transmembrane segment at 383 to 410 threads the bilayer; the sequence is LIPIAVGGALAGLVLIVLIAYLVGRKRS. Residues 411–417 lie on the Cytoplasmic side of the membrane; it reads HAGYQTI.

This sequence belongs to the LAMP family. As to quaternary structure, interacts with ABCB9; this interaction strongly stabilizes ABCB9 and protects ABCB9 against lysosomal degradation. Interacts with FURIN. Interacts with TMEM175; inhibiting the proton channel activity of TMEM175. In terms of assembly, (Microbial infection) Interacts with Lassa virus protein glycoprotein. (Microbial infection) Interacts with mumps virus protein F; this interaction promotes protein F cleavage by FURIN. O- and N-glycosylated; some of the 18 N-linked glycans are polylactosaminoglycans. In terms of processing, (Microbial infection) The glycosylation of Asn-76 is essential for Lassa virus entry into cells.

The protein localises to the lysosome membrane. It localises to the endosome membrane. Its subcellular location is the late endosome membrane. It is found in the cell membrane. The protein resides in the cytolytic granule membrane. Lysosomal membrane glycoprotein which plays an important role in lysosome biogenesis, lysosomal pH regulation, autophagy and cholesterol homeostasis. Acts as an important regulator of lysosomal lumen pH regulation by acting as a direct inhibitor of the proton channel TMEM175, facilitating lysosomal acidification for optimal hydrolase activity. Also plays an important role in NK-cells cytotoxicity. Mechanistically, participates in cytotoxic granule movement to the cell surface and perforin trafficking to the lytic granule. In addition, protects NK-cells from degranulation-associated damage induced by their own cytotoxic granule content. Presents carbohydrate ligands to selectins. Its function is as follows. (Microbial infection) Acts as a receptor for Lassa virus glycoprotein. Also promotes fusion of the virus with host membrane in less acidic endosomes. In terms of biological role, (Microbial infection) Supports the FURIN-mediated cleavage of mumps virus fusion protein F by interacting with both FURIN and the unprocessed form but not the processed form of the viral protein F. The chain is Lysosome-associated membrane glycoprotein 1 from Homo sapiens (Human).